A 186-amino-acid polypeptide reads, in one-letter code: Large ribosomal subunit protein uL10 (186 aa).

Part of the ribosomal stalk of the 50S ribosomal subunit. The N-terminus interacts with L11 and the large rRNA to form the base of the stalk. The C-terminus forms an elongated spine to which L12 dimers bind in a sequential fashion forming a multimeric L10(L12)X complex.

Its function is as follows. Forms part of the ribosomal stalk, playing a central role in the interaction of the ribosome with GTP-bound translation factors. This Rhodopseudomonas palustris (strain ATCC BAA-98 / CGA009) protein is Large ribosomal subunit protein uL10.